Here is a 209-residue protein sequence, read N- to C-terminus: Isopentenyl-diphosphate Delta-isomerase (209 aa).

Residues H31 and H38 each coordinate Mn(2+). Residues 36–171 enclose the Nudix hydrolase domain; the sequence is PLHLAFSVYI…RLLVSPWCRA (136 aa). C73 is a catalytic residue. C73 contributes to the Mg(2+) binding site. Mn(2+) is bound at residue H75. Residue E93 coordinates Mg(2+). Mn(2+) is bound by residues E120 and E122. E122 is a catalytic residue.

It belongs to the IPP isomerase type 1 family. It depends on Mg(2+) as a cofactor. Mn(2+) serves as cofactor.

Its subcellular location is the cytoplasm. It carries out the reaction isopentenyl diphosphate = dimethylallyl diphosphate. Its pathway is isoprenoid biosynthesis; dimethylallyl diphosphate biosynthesis; dimethylallyl diphosphate from isopentenyl diphosphate: step 1/1. In terms of biological role, catalyzes the 1,3-allylic rearrangement of the homoallylic substrate isopentenyl (IPP) to its highly electrophilic allylic isomer, dimethylallyl diphosphate (DMAPP). The polypeptide is Isopentenyl-diphosphate Delta-isomerase (Rhizobium rhizogenes (Agrobacterium rhizogenes)).